The sequence spans 343 residues: Small ribosomal subunit biogenesis GTPase RsgA (343 aa).

A disordered region spans residues 1 to 32 (MAKRRLSKRQVDRIRERQSQRLDTSVAAPDGK). Over residues 9 to 20 (RQVDRIRERQSQ) the composition is skewed to basic and acidic residues. A CP-type G domain is found at 109–273 (YGKLKPVAAN…CIDSPGIREF (165 aa)). GTP is bound by residues 156-159 (NKLD) and 215-223 (GQSGVGKSS). The Zn(2+) site is built by Cys-297, Cys-302, His-304, and Cys-310.

Belongs to the TRAFAC class YlqF/YawG GTPase family. RsgA subfamily. Monomer. Associates with 30S ribosomal subunit, binds 16S rRNA. Requires Zn(2+) as cofactor.

It is found in the cytoplasm. One of several proteins that assist in the late maturation steps of the functional core of the 30S ribosomal subunit. Helps release RbfA from mature subunits. May play a role in the assembly of ribosomal proteins into the subunit. Circularly permuted GTPase that catalyzes slow GTP hydrolysis, GTPase activity is stimulated by the 30S ribosomal subunit. This is Small ribosomal subunit biogenesis GTPase RsgA from Saccharophagus degradans (strain 2-40 / ATCC 43961 / DSM 17024).